Consider the following 150-residue polypeptide: Mating pheromone 1 (150 aa).

An N-terminal signal peptide occupies residues Met1–Ala16. Residues Phe17 to Lys52 constitute a propeptide that is removed on maturation.

The protein localises to the secreted. In terms of biological role, mating ciliate pheromones (or gamones) are diffusible extracellular communication signals that distinguish different intraspecific classes of cells commonly referred to as 'mating types'. They prepare the latter for conjugation by changing their cell surface properties. This Euplotoides octocarinatus (Freshwater ciliate) protein is Mating pheromone 1.